The sequence spans 445 residues: Interferon-activable protein 202 (445 aa).

Residues 1–27 (MSNRNLRSSTNSEFSEGQHQTPSSDSS) are compositionally biased toward polar residues. Residues 1-57 (MSNRNLRSSTNSEFSEGQHQTPSSDSSGHGEDQPQASPGPNKKSHTPKKNISKGAVL) are disordered. Residues 42-51 (KKSHTPKKNI) are compositionally biased toward basic residues. HIN-200 domains are found at residues 46 to 243 (TPKK…IKGE) and 244 to 441 (KLLK…MEVI). Required for homomultimerization stretches follow at residues 82 to 89 (MFHATVAT) and 281 to 288 (MFHATVAT).

Belongs to the HIN-200 family. In terms of assembly, homomultimer; homotetramerizes (via HIN-200 domain 2), enhancing affinity for double-stranded DNA (dsDNA). Interacts (via HIN-200 domain 2) with AIM2 (via HIN-200 domain); preventing activation of the AIM2 inflammasome. Binds to several transcription factors, including NF-kappa-B p50 (NFKB1) and p65 (RELA), FOS, JUN, E2F1, E2F4, MYOD1 and myogenin. Also binds TP53/p53, the hypophosphorylated, growth-inhibitory form of the retinoblastoma protein and the p53-binding protein 1 (TP53BP1). Phosphorylated.

Its subcellular location is the cytoplasm. It is found in the nucleus. Functionally, DNA-binding protein involved in innate immune response and has anti-inflammatory activity. Inhibits caspase activation in response to cytosolic DNA by preventing activation of the AIM2 inflammasome, probably by sequestering cytoplasmic DNA and preventing its being bound by AIM2. Also inhibits activation of the AIM2 inflammasome via a direct interaction with AIM2, which prevents the interaction between AIM2 and PYCARD and formation of the AIM2 inflammasome. Binds double-stranded DNA (dsDNA) in the cytosol. Has anti-apoptotic effects due to inhibition of the transcriptional activity of TP53/p53. Inhibits the transcriptional activity of several transcription factors, including NF-kappa-B p50 and p65, FOS, JUN, E2F1, E2F4, MYOD1 and myogenin. The polypeptide is Interferon-activable protein 202 (Mus musculus (Mouse)).